Reading from the N-terminus, the 126-residue chain is Adenosine 5'-monophosphoramidase HINT1 (126 aa).

N-acetylalanine is present on A2. The HIT domain maps to I18–G126. N6-acetyllysine occurs at positions 21 and 30. Residue D43–I44 coordinates AMP. Phosphoserine occurs at positions 45 and 72. AMP contacts are provided by residues N99, G105–S107, and H112–H114. The Histidine triad motif signature appears at H110 to H114. H112 serves as the catalytic Tele-AMP-histidine intermediate.

This sequence belongs to the HINT family. In terms of assembly, homodimer. Interacts with CDK7. Interacts with RUVBL1 and RUVBL2 and is associated with the LEF1/TCF1-CTNNB1 complex and with a KAT5 histone acetyltransferase complex. Identified in a complex with MITF and CTNNB1. Interacts with CDC34 and RBX1, and is part of a SCF (SKP2-CUL1-F-box protein) E3 ubiquitin-protein ligase complex. Interacts with SUMO1, SUMO2 and RGS17. Interacts with the Ten-1 ICD form of TENM1. Interacts with CALM1; interaction increases in the presence of calcium ions. In terms of tissue distribution, widely expressed.

Its subcellular location is the cytoplasm. It localises to the nucleus. The catalysed reaction is adenosine 5'-phosphoramidate + H2O = AMP + NH4(+). In terms of biological role, exhibits adenosine 5'-monophosphoramidase activity, hydrolyzing purine nucleotide phosphoramidates with a single phosphate group such as adenosine 5'monophosphoramidate (AMP-NH2) to yield AMP and NH2. Hydrolyzes adenosine 5'monophosphomorpholidate (AMP-morpholidate) and guanosine 5'monophosphomorpholidate (GMP-morpholidate). Hydrolyzes lysyl-AMP (AMP-N-epsilon-(N-alpha-acetyl lysine methyl ester)) generated by lysine tRNA ligase, as well as Met-AMP, His-AMP and Asp-AMP, lysyl-GMP (GMP-N-epsilon-(N-alpha-acetyl lysine methyl ester)) and AMP-N-alanine methyl ester. Can also convert adenosine 5'-O-phosphorothioate and guanosine 5'-O-phosphorothioate to the corresponding nucleoside 5'-O-phosphates with concomitant release of hydrogen sulfide. In addition, functions as a scaffolding protein that modulates transcriptional activation by the LEF1/TCF1-CTNNB1 complex and by the complex formed with MITF and CTNNB1. Modulates p53/TP53 levels and p53/TP53-mediated apoptosis. Modulates proteasomal degradation of target proteins by the SCF (SKP2-CUL1-F-box protein) E3 ubiquitin-protein ligase complex. Also exhibits SUMO-specific isopeptidase activity, deconjugating SUMO1 from RANGAP1 and RGS17. The sequence is that of Adenosine 5'-monophosphoramidase HINT1 (HINT1) from Bos taurus (Bovine).